Consider the following 134-residue polypeptide: Small ribosomal subunit protein uS9 (134 aa).

Residues 109-134 (DARRTEPHKPSKSSKGPRAKRQKSYR) are disordered. The span at 118-134 (PSKSSKGPRAKRQKSYR) shows a compositional bias: basic residues.

Belongs to the universal ribosomal protein uS9 family.

The sequence is that of Small ribosomal subunit protein uS9 from Methanococcus maripaludis (strain C7 / ATCC BAA-1331).